The chain runs to 150 residues: UPF0735 ACT domain-containing protein DSY2247 (150 aa).

An ACT domain is found at 74–149 (TFSLTLENTA…GVRKIEVIGQ (76 aa)).

Belongs to the UPF0735 family.

The chain is UPF0735 ACT domain-containing protein DSY2247 from Desulfitobacterium hafniense (strain Y51).